The sequence spans 662 residues: Transketolase (662 aa).

Position 28 (histidine 28) interacts with substrate. Residues histidine 68 and 115–117 each bind thiamine diphosphate; that span reads GPL. Residue aspartate 156 coordinates Mg(2+). The thiamine diphosphate site is built by glycine 157 and asparagine 186. The Mg(2+) site is built by asparagine 186 and isoleucine 188. Positions 261, 356, and 383 each coordinate substrate. Histidine 261 lines the thiamine diphosphate pocket. Glutamate 410 (proton donor) is an active-site residue. A thiamine diphosphate-binding site is contributed by phenylalanine 436. Substrate contacts are provided by histidine 460, aspartate 468, and arginine 519.

This sequence belongs to the transketolase family. As to quaternary structure, homodimer. Mg(2+) serves as cofactor. Requires Ca(2+) as cofactor. Mn(2+) is required as a cofactor. The cofactor is Co(2+). It depends on thiamine diphosphate as a cofactor.

The enzyme catalyses D-sedoheptulose 7-phosphate + D-glyceraldehyde 3-phosphate = aldehydo-D-ribose 5-phosphate + D-xylulose 5-phosphate. It participates in carbohydrate biosynthesis; Calvin cycle. It functions in the pathway carbohydrate degradation; pentose phosphate pathway. Its function is as follows. Catalyzes the transfer of a two-carbon ketol group from a ketose donor to an aldose acceptor, via a covalent intermediate with the cofactor thiamine pyrophosphate. This chain is Transketolase (tkt), found in Staphylococcus epidermidis (strain ATCC 12228 / FDA PCI 1200).